The sequence spans 319 residues: Type II secretion system protein C 2 (319 aa).

Residues 1 to 42 are Cytoplasmic-facing; that stretch reads MARVVFRDARIYLIQWLTKIRHTLNQRQSLNTDKEHLRKIVR. Residues 43–65 form a helical membrane-spanning segment; that stretch reads GMFWLMLLIISAKVAHSLWRYFS. Residues 66–319 lie on the Periplasmic side of the membrane; it reads FSAEYTAVSP…ARHDISIALR (254 aa).

This sequence belongs to the GSP C family. In terms of assembly, interacts with outer cell membrane protein GspD2 in the periplasm.

It localises to the cell inner membrane. Involved in a type II secretion system (T2SS, formerly general secretion pathway, GSP) for the export of folded proteins across the outer membrane. The protein is Type II secretion system protein C 2 (gspC2) of Escherichia coli O78:H11 (strain H10407 / ETEC).